The sequence spans 197 residues: Pyridoxal 5'-phosphate synthase subunit PdxT (197 aa).

54-56 (GES) provides a ligand contact to L-glutamine. C86 acts as the Nucleophile in catalysis. Residues R113 and 141–142 (IR) each bind L-glutamine. Active-site charge relay system residues include H177 and E179.

The protein belongs to the glutaminase PdxT/SNO family. In terms of assembly, in the presence of PdxS, forms a dodecamer of heterodimers. Only shows activity in the heterodimer.

The enzyme catalyses aldehydo-D-ribose 5-phosphate + D-glyceraldehyde 3-phosphate + L-glutamine = pyridoxal 5'-phosphate + L-glutamate + phosphate + 3 H2O + H(+). It catalyses the reaction L-glutamine + H2O = L-glutamate + NH4(+). Its pathway is cofactor biosynthesis; pyridoxal 5'-phosphate biosynthesis. In terms of biological role, catalyzes the hydrolysis of glutamine to glutamate and ammonia as part of the biosynthesis of pyridoxal 5'-phosphate. The resulting ammonia molecule is channeled to the active site of PdxS. In Haloarcula marismortui (strain ATCC 43049 / DSM 3752 / JCM 8966 / VKM B-1809) (Halobacterium marismortui), this protein is Pyridoxal 5'-phosphate synthase subunit PdxT.